The primary structure comprises 208 residues: Thymidylate kinase (208 aa).

Residue 9-16 (GGEGCGKS) participates in ATP binding.

It belongs to the thymidylate kinase family.

The enzyme catalyses dTMP + ATP = dTDP + ADP. Phosphorylation of dTMP to form dTDP in both de novo and salvage pathways of dTTP synthesis. This chain is Thymidylate kinase, found in Dehalococcoides mccartyi (strain ATCC BAA-2100 / JCM 16839 / KCTC 5957 / BAV1).